A 256-amino-acid chain; its full sequence is Undecaprenyl-diphosphatase (256 aa).

A run of 7 helical transmembrane segments spans residues valine 8–isoleucine 28, phenylalanine 41–tyrosine 61, isoleucine 75–glycine 95, phenylalanine 96–isoleucine 116, alanine 175–isoleucine 195, isoleucine 208–leucine 228, and leucine 236–phenylalanine 256.

This sequence belongs to the UppP family.

The protein resides in the cell inner membrane. The catalysed reaction is di-trans,octa-cis-undecaprenyl diphosphate + H2O = di-trans,octa-cis-undecaprenyl phosphate + phosphate + H(+). Its function is as follows. Catalyzes the dephosphorylation of undecaprenyl diphosphate (UPP). Confers resistance to bacitracin. This chain is Undecaprenyl-diphosphatase, found in Aquifex aeolicus (strain VF5).